A 58-amino-acid polypeptide reads, in one-letter code: Large ribosomal subunit protein bL32 (58 aa).

This sequence belongs to the bacterial ribosomal protein bL32 family.

The protein is Large ribosomal subunit protein bL32 of Anaplasma phagocytophilum (strain HZ).